A 620-amino-acid chain; its full sequence is Endoglucanase 6 (620 aa).

A signal peptide spans 1–22 (MEKFAPVAALLLLLLCFPVAFS). Catalysis depends on D78, which acts as the Nucleophile. Residues H411, D463, and E472 contribute to the active site. N-linked (GlcNAc...) asparagine glycosylation is found at N554 and N564.

The protein belongs to the glycosyl hydrolase 9 (cellulase E) family.

Its subcellular location is the secreted. The catalysed reaction is Endohydrolysis of (1-&gt;4)-beta-D-glucosidic linkages in cellulose, lichenin and cereal beta-D-glucans.. This chain is Endoglucanase 6, found in Arabidopsis thaliana (Mouse-ear cress).